A 685-amino-acid polypeptide reads, in one-letter code: Invasion protein InvA (685 aa).

A run of 8 helical transmembrane segments spans residues 17 to 37, 39 to 59, 61 to 81, 110 to 130, 197 to 217, 235 to 255, 274 to 294, and 295 to 315; these read ILVLMVMIISMFVIPLPTYLV, FLIALNIVLAILVFMGSFYID, ILSFSTFPAVLLITTLFRLAL, SLAVGFVVFSIVTVVQFIVIT, AIAGIIIIFVNFIGGISVGMT, IGDGLVAQIPALLIAISAGFI, LLNNPFVLVVTAILTISMGTL, and PGFPLPVFVILSVVLSVLFYF.

Belongs to the FHIPEP (flagella/HR/invasion proteins export pore) family.

The protein resides in the cell inner membrane. In terms of biological role, involved in the invasion of the cells of the intestinal epithelium. Could be involved in the translocation of the InvE protein. This chain is Invasion protein InvA (invA), found in Salmonella typhi.